A 548-amino-acid polypeptide reads, in one-letter code: MDIYVVGPFGHAMDLLPNPTRPFSGRLHELSALALQRPQLVITTLGALLLAAFYLLPSKDPYNLKRIPMVSRSRVLDAYRSGVWWRFILPRFYPYIHEGYLKYSTKDRPFRVWLAQFQIWVYILPLKYLPLVKNQGITELSLRDFIDKATSAQLSSGSFDTFEVQVGSKLLNGNLIDIKPIVQTRTEQILERVIGRPREWRRFNIRALSVQVVKHVSARIAFGEALADNPGFLDAMERYSLNVIPYTLVFRYFNLGPLRYPLLYLIHLRQRQTLAVATRYVTDLIAERQRKEKEHRLDGDERPVDCIQWSMDQDIPDEQKAPEAVAHRLLHISAALIDAPITSMMNVLADIISYARDEVLDDLRAEIVECLAEFDGAWTEASMAKMKKLDSFFQESFRMTSGLIPLTGWRLIKADCFRFDNDLVLPRGSTIVFPTQCIQLDPNIYPNPDKFDYLRFYRMKEHTQSTDARTGKEVPRHEWLSFGHGRQACPGRFYSIRLLKTILGEMMLRYDIRYAGGDRPRPPMIDLEPILAPDTSVELEFRVRQNVT.

The helical transmembrane segment at 38–58 (PQLVITTLGALLLAAFYLLPS) threads the bilayer. A heme-binding site is contributed by Cys-489.

This sequence belongs to the cytochrome P450 family. It depends on heme as a cofactor.

It localises to the membrane. The protein operates within secondary metabolite biosynthesis; terpenoid biosynthesis. Cytochrome P450 monooxygenase; part of the gene cluster that mediates the biosynthesis of aspergiltriene A, aspergildienes A-D and aspergilols A-D. The bifunctional terpene synthase AuAS converts DMAPP and IPP into sesterterpenes. The C-terminal prenyltransferase (PT) domain of AuAS catalyzes formation of GFPP, whereas the N-terminal terpene cyclase (TC) domain catalyzes the cyclization of GFPP into 5 distinct sesterterpenes: aspergiltriene A, aspergildiene A, aspergildiene B, aspergildiene C and aspergildiene D. The cytochrome P450 monooxygenase AP450 then hydroxylates the aspergildienes A, B, C and D to yield the corresponding sesterterpene alcohols, aspergilols A-D. The chain is Aspergilol synthase AuAP450 from Aspergillus ustus.